A 58-amino-acid polypeptide reads, in one-letter code: Bowman-Birk type wound-induced trypsin inhibitor (58 aa).

Disulfide bonds link Cys-4–Cys-57, Cys-5–Cys-20, Cys-8–Cys-53, Cys-10–Cys-18, Cys-27–Cys-34, Cys-31–Cys-46, and Cys-36–Cys-44.

The protein belongs to the Bowman-Birk serine protease inhibitor family.

The protein is Bowman-Birk type wound-induced trypsin inhibitor of Medicago sativa (Alfalfa).